We begin with the raw amino-acid sequence, 124 residues long: MRHYEIVFIVHPDQSEQVPAMIERYKTTITSHGGQIHRIEDWGRRQLAYMIEKLAKAHYVCMNIECDQATLDELEHAFKFNDAVLRHLIVKMKKAETGPSPMMKEVQREEAKKAAAAQPTEAQA.

Residues 97–124 (TGPSPMMKEVQREEAKKAAAAQPTEAQA) form a disordered region. Over residues 114 to 124 (AAAAQPTEAQA) the composition is skewed to low complexity.

The protein belongs to the bacterial ribosomal protein bS6 family.

Binds together with bS18 to 16S ribosomal RNA. This chain is Small ribosomal subunit protein bS6, found in Paraburkholderia phymatum (strain DSM 17167 / CIP 108236 / LMG 21445 / STM815) (Burkholderia phymatum).